The sequence spans 294 residues: Elongation factor Ts (294 aa).

The tract at residues 80 to 83 is involved in Mg(2+) ion dislocation from EF-Tu; it reads TDFV.

This sequence belongs to the EF-Ts family.

The protein resides in the cytoplasm. In terms of biological role, associates with the EF-Tu.GDP complex and induces the exchange of GDP to GTP. It remains bound to the aminoacyl-tRNA.EF-Tu.GTP complex up to the GTP hydrolysis stage on the ribosome. The polypeptide is Elongation factor Ts (Polynucleobacter asymbioticus (strain DSM 18221 / CIP 109841 / QLW-P1DMWA-1) (Polynucleobacter necessarius subsp. asymbioticus)).